A 376-amino-acid chain; its full sequence is Nuclear egress protein 1 (376 aa).

S19 carries the phosphoserine modification. Residues 22–57 (RKRRQRELASKVASTVNGATSANNHGEPPSPADARP) form a disordered region. A compositionally biased stretch (polar residues) spans 33–45 (VASTVNGATSANN). The segment at 106-211 (CLDISPYGNE…HVIFENSDVH (106 aa)) adopts a CCCH-type zinc-finger fold. A disordered region spans residues 316 to 376 (VVSTNGCGPS…PLFLNSIRAP (61 aa)). The segment covering 317–332 (VSTNGCGPSSSSQSTP) has biased composition (polar residues).

The protein belongs to the herpesviridae NEC1 protein family. Forms a heterohexameric complex with NEC2. Interacts with capsid vertex specific component 2/CVC2; this interaction directs the capsid to the host inner nuclear membrane to initiate budding. Phosphorylated at serine residues in the N-terminus. This phosphorylation regulates the localization within the inner nuclear membrane. Phosphorylation by viral kinase UL97 at Ser-19 plays an important role for correct viral nuclear egress complex (NEC) localization.

It localises to the host nucleus inner membrane. Functionally, plays an essential role in virion nuclear egress, the first step of virion release from infected cell. Within the host nucleus, NEC1 interacts with the newly formed capsid through the vertexes and directs it to the inner nuclear membrane by associating with NEC2. Induces the budding of the capsid at the inner nuclear membrane as well as its envelopment into the perinuclear space. There, the NEC1/NEC2 complex promotes the fusion of the enveloped capsid with the outer nuclear membrane and the subsequent release of the viral capsid into the cytoplasm where it will reach the secondary budding sites in the host Golgi or trans-Golgi network. In Homo sapiens (Human), this protein is Nuclear egress protein 1.